The sequence spans 101 residues: Small ribosomal subunit protein uS14 (101 aa).

Belongs to the universal ribosomal protein uS14 family. Part of the 30S ribosomal subunit. Contacts proteins S3 and S10.

Functionally, binds 16S rRNA, required for the assembly of 30S particles and may also be responsible for determining the conformation of the 16S rRNA at the A site. This Hyphomonas neptunium (strain ATCC 15444) protein is Small ribosomal subunit protein uS14.